The sequence spans 287 residues: Bifunctional protein FolD 2 (287 aa).

NADP(+)-binding positions include G166 to S168 and I232.

The protein belongs to the tetrahydrofolate dehydrogenase/cyclohydrolase family. In terms of assembly, homodimer.

The enzyme catalyses (6R)-5,10-methylene-5,6,7,8-tetrahydrofolate + NADP(+) = (6R)-5,10-methenyltetrahydrofolate + NADPH. It catalyses the reaction (6R)-5,10-methenyltetrahydrofolate + H2O = (6R)-10-formyltetrahydrofolate + H(+). It participates in one-carbon metabolism; tetrahydrofolate interconversion. In terms of biological role, catalyzes the oxidation of 5,10-methylenetetrahydrofolate to 5,10-methenyltetrahydrofolate and then the hydrolysis of 5,10-methenyltetrahydrofolate to 10-formyltetrahydrofolate. This is Bifunctional protein FolD 2 from Hydrogenovibrio crunogenus (strain DSM 25203 / XCL-2) (Thiomicrospira crunogena).